A 317-amino-acid polypeptide reads, in one-letter code: Putative cuticle collagen 80 (317 aa).

A disordered region spans residues Cys-80 to Gly-262. 3 triple-helical region regions span residues Gly-92 to Ala-124, Gly-137 to Arg-199, and Gly-202 to Asp-264. 3 stretches are compositionally biased toward low complexity: residues Gln-108–Ala-124, Pro-135–Pro-145, and Ala-175–Pro-206. 2 stretches are compositionally biased toward pro residues: residues Ser-207–Pro-219 and Pro-230–Asn-240. The span at Gln-242–Gly-262 shows a compositional bias: low complexity.

The protein belongs to the cuticular collagen family. In terms of assembly, collagen polypeptide chains are complexed within the cuticle by disulfide bonds and other types of covalent cross-links.

Nematode cuticles are composed largely of collagen-like proteins. The cuticle functions both as an exoskeleton and as a barrier to protect the worm from its environment. This chain is Putative cuticle collagen 80 (col-80), found in Caenorhabditis elegans.